The chain runs to 515 residues: MMLKSCGLIFKGKRFVRLFIFIAVCLGFLIAVTILAGLTIFDRQHNHILHDYVARNDDIVVLSTTYYENSKSFPPNTAVILFNSVQVFHLKYSNLNVVAETMQGNVEVQFKIQPVINTIPFFCKWVPYLAVGQVPEDHVLLKLSTNKIDGMELSLRTPYETPRKVVACFSPLFLNERWQLLLATVEIYSHYGAFMHFYVRSIITDLFKLIKDNKNTRISPWSAIRIGESRAASPMFDPNTELEFRNQASAMTDCLLQYKEAAEFIVFPDPDDILVPVLGKNYYEEFTQAFKMFPTAGAVVYNMTQTSIESSMTPALYSPISMLASMKFKGEQKWGKLVVRPERVDSTWIHRSYAIKEGFEQKVMPVDVNAFYHLRIWKFPEVPTFNRSKISNPPFFDPYHLNATKRAIYKISDGLKIQRKFKNRVSQGTMKTIYSRLPKVSLYYPLIEVCYNRIFYSMKDIGTCRGPEYCNIPAFPGLRCTNVASEFVTYKSYRNIYIHQLISTDFEEGDNGCTL.

Residues 18–38 traverse the membrane as a helical segment; the sequence is LFIFIAVCLGFLIAVTILAGL. In terms of domain architecture, GT92 spans 163-456; that stretch reads RKVVACFSPL…IEVCYNRIFY (294 aa).

It belongs to the glycosyltransferase 92 family.

It is found in the membrane. The chain is Glycosyltransferase family 92 protein F59C6.8 from Caenorhabditis elegans.